The sequence spans 225 residues: Suppressor of cytokine signaling 3 (225 aa).

A kinase inhibitory region (KIR) region spans residues 22–33 (LKTFSSKSEYQL). An extended SH2 subdomain (ESS) region spans residues 34-45 (VVNAVRKLQESG). Residues 46–142 (FYWSAVTGGE…TPSFSLPPTE (97 aa)) enclose the SH2 domain. The disordered stretch occupies residues 131 to 160 (PGTPSFSLPPTEPSSEVPEQPPAQALPGST). In terms of domain architecture, SOCS box spans 177-224 (VLSRPLSSNVATLQHLCRKTVNGHLDSYEKVTQLPGPIREFLDQYDAP).

As to quaternary structure, interacts with multiple activated proteins of the tyrosine kinase signaling pathway including IGF1 receptor, insulin receptor and JAK2. Binding to JAK2 is mediated through the KIR and SH2 domains to a phosphorylated tyrosine residue within the JAK2 JH1 domain. Binds specific activated tyrosine residues of the leptin, EPO, IL12, GSCF and gp130 receptors. Interaction with CSNK1E stabilizes SOCS3 protein. Component of the probable ECS(SOCS3) E3 ubiquitin-protein ligase complex which contains CUL5, RNF7/RBX2, elongin BC complex and SOCS3. Interacts with CUL5, RNF7, ELOB and ELOC. Interacts with FGFR3. Interacts with INSR. Interacts with BCL10; this interaction may interfere with BCL10-binding with PELI2. Interacts with NOD2 (via CARD domain); the interaction promotes NOD2 degradation. Phosphorylated on tyrosine residues after stimulation by the cytokines, IL-2, EPO or IGF1. In terms of tissue distribution, low expression in lung, spleen and thymus. Expressed in Th2 but not TH1 cells.

Its pathway is protein modification; protein ubiquitination. Functionally, SOCS family proteins form part of a classical negative feedback system that regulates cytokine signal transduction. SOCS3 is involved in negative regulation of cytokines that signal through the JAK/STAT pathway. Inhibits cytokine signal transduction by binding to tyrosine kinase receptors including IL6ST/gp130, LIF, erythropoietin, insulin, IL12, GCSF and leptin receptors. Binding to JAK2 inhibits its kinase activity and regulates IL6 signaling. Suppresses fetal liver erythropoiesis. Regulates onset and maintenance of allergic responses mediated by T-helper type 2 cells. Probable substrate recognition component of a SCF-like ECS (Elongin BC-CUL2/5-SOCS-box protein) E3 ubiquitin-protein ligase complex which mediates the ubiquitination and subsequent proteasomal degradation of target proteins. The sequence is that of Suppressor of cytokine signaling 3 from Mus musculus (Mouse).